We begin with the raw amino-acid sequence, 545 residues long: Pentatricopeptide repeat-containing protein At4g18840 (545 aa).

11 PPR repeats span residues Asn104 to Pro138, Asp139 to Thr173, Asp174 to Arg204, Asp205 to Ser239, Trp240 to Arg266, Asp267 to Lys301, Asp303 to Ile337, Glu338 to Arg368, Asp369 to Pro403, Asn404 to Val434, and Thr440 to Ile474. The type E motif stretch occupies residues Leu475–Ala545.

Belongs to the PPR family. PCMP-E subfamily.

In Arabidopsis thaliana (Mouse-ear cress), this protein is Pentatricopeptide repeat-containing protein At4g18840 (PCMP-E101).